The sequence spans 208 residues: Ribosomal RNA large subunit methyltransferase E (208 aa).

Residues G61, W63, D81, D97, and D122 each contribute to the S-adenosyl-L-methionine site. The Proton acceptor role is filled by K162.

The protein belongs to the class I-like SAM-binding methyltransferase superfamily. RNA methyltransferase RlmE family.

It localises to the cytoplasm. The enzyme catalyses uridine(2552) in 23S rRNA + S-adenosyl-L-methionine = 2'-O-methyluridine(2552) in 23S rRNA + S-adenosyl-L-homocysteine + H(+). In terms of biological role, specifically methylates the uridine in position 2552 of 23S rRNA at the 2'-O position of the ribose in the fully assembled 50S ribosomal subunit. This chain is Ribosomal RNA large subunit methyltransferase E, found in Pseudomonas putida (strain GB-1).